We begin with the raw amino-acid sequence, 361 residues long: Mitogen-activated protein kinase 1 (361 aa).

The region spanning 28-316 (YINLAYIGEG…VEAALAHPYL (289 aa)) is the Protein kinase domain. ATP is bound by residues 34–42 (IGEGAYGMV) and Lys-57. The active-site Proton acceptor is the Asp-152. Thr-188 is modified (phosphothreonine). Residues 188–190 (TEY) carry the TXY motif. Tyr-190 bears the Phosphotyrosine mark.

This sequence belongs to the protein kinase superfamily. CMGC Ser/Thr protein kinase family. MAP kinase subfamily. As to quaternary structure, interacts with CDK2AP2. It depends on Mg(2+) as a cofactor. Post-translationally, dually phosphorylated on Thr-188 and Tyr-190, which activates the enzyme. Expressed in the central nervous system, kidney, liver, intestine and the hematopoietic system. Also found in heart, muscle, pancreas and lung.

It localises to the cytoplasm. The protein resides in the cytoskeleton. Its subcellular location is the microtubule organizing center. It is found in the centrosome. The protein localises to the spindle. It carries out the reaction L-seryl-[protein] + ATP = O-phospho-L-seryl-[protein] + ADP + H(+). The enzyme catalyses L-threonyl-[protein] + ATP = O-phospho-L-threonyl-[protein] + ADP + H(+). Its activity is regulated as follows. Activated by tyrosine phosphorylation during the M phase of the meiotic cell cycle. Dephosphorylated and inactivated by DUSP1. Serine/threonine kinase which acts as an essential component of the MAP kinase signal transduction pathway. Plays an important role in the MAPK/ERK cascade. Depending on the cellular context, this cascade mediates diverse biological functions such as cell growth, adhesion, survival and differentiation through the regulation of transcription, translation, cytoskeletal rearrangements. The MAPK/ERK cascade also plays a role in initiation and regulation of meiosis, mitosis, and postmitotic functions in differentiated cells by phosphorylating a number of transcription factors. Many of the substrates are localized in the nucleus, and seem to participate in the regulation of transcription upon stimulation. However, other substrates are found in the cytosol as well as in other cellular organelles, and those are responsible for processes such as translation, mitosis and apoptosis. Moreover, the MAPK/ERK cascade is also involved in the regulation of the endosomal dynamics, including lysosome processing and endosome cycling through the perinuclear recycling compartment (PNRC); as well as in the fragmentation of the Golgi apparatus during mitosis. Phosphorylates microtubule-associated protein 2 (MAP2), myelin basic protein (MBP) and Elk-1. Phosphorylates dual specificity protein phosphatase 1 (DUSP1) during meiosis, increasing its stability. Activated by M phase promoting factor (MPF). Plays a role in the spindle assembly checkpoint. The sequence is that of Mitogen-activated protein kinase 1 (mapk1) from Xenopus laevis (African clawed frog).